A 1140-amino-acid polypeptide reads, in one-letter code: Centrosomal protein of 135 kDa (1140 aa).

The interval 11–64 (NIRKRLDQLGYRQTLTVECLPLVEKLFSDLVHTTESLRQSKLSAVKAEKESANF) is homodimerization. Coiled-coil stretches lie at residues 75-151 (NARL…KNLH) and 199-416 (LQVA…FAVT). Serine 383 and serine 439 each carry phosphoserine. 3 coiled-coil regions span residues 447–644 (LKGI…LENK), 668–1036 (SLRI…LESL), and 1079–1113 (NTML…AIQE). A Phosphoserine modification is found at serine 688. A disordered region spans residues 1114–1140 (MRRHGLATPPLSSTLRSPSHSPEHRNV). Position 1121 is a phosphothreonine (threonine 1121). Residues 1121-1133 (TPPLSSTLRSPSH) show a composition bias toward low complexity. Position 1130 is a phosphoserine (serine 1130).

It belongs to the CEP135/TSGA10 family. As to quaternary structure, homodimer. Interacts with DCTN2. Interacts with CEP250.

The protein localises to the cytoplasm. The protein resides in the cytoskeleton. It is found in the microtubule organizing center. It localises to the centrosome. Its subcellular location is the centriole. In terms of biological role, centrosomal microtubule-binding protein involved in centriole biogenesis. Acts as a scaffolding protein during early centriole biogenesis. Required for the targeting of centriole satellite proteins to centrosomes such as of PCM1, SSX2IP and CEP290 and recruitment of WRAP73 to centrioles. Also required for centriole-centriole cohesion during interphase by acting as a platform protein for CEP250 at the centriole. Required for the recruitment of CEP295 to the proximal end of new-born centrioles at the centriolar microtubule wall during early S phase in a PLK4-dependent manner. The protein is Centrosomal protein of 135 kDa of Homo sapiens (Human).